The primary structure comprises 309 residues: MFSPADNIFIILITGEFILGILGNGYIALVNWIDWIKKKKISTVDYILTNLVIARICLISVMVVNGIVIVLNPDVYTKNKQQIVIFTFWTFANYLNMWITTCLNVFYFLKIASSSHPLFLWLKWKIDMVVHWILLGCFAISLLVSLIAAIVLSCDYRFHAIAKHKRNITEMFHVSKXPYFEPLTLFNLFAIVPFIVSLISFFLLVRSLWRHTKQIKLYATGSRDPSTEVHVRAIKTMTSFIFFFFLYFISSILMTFSYLMTKYKLAVEFGEIAAILYPLGHSLILIVLNNKLRQIFVRMLTCRKIACVI.

Topologically, residues 1–7 (MFSPADN) are extracellular. Residues 8–28 (IFIILITGEFILGILGNGYIA) form a helical membrane-spanning segment. Over 29 to 50 (LVNWIDWIKKKKISTVDYILTN) the chain is Cytoplasmic. Residues 51 to 71 (LVIARICLISVMVVNGIVIVL) form a helical membrane-spanning segment. Over 72 to 82 (NPDVYTKNKQQ) the chain is Extracellular. Residues 83 to 103 (IVIFTFWTFANYLNMWITTCL) traverse the membrane as a helical segment. Topologically, residues 104–131 (NVFYFLKIASSSHPLFLWLKWKIDMVVH) are cytoplasmic. Residues 132-152 (WILLGCFAISLLVSLIAAIVL) form a helical membrane-spanning segment. Residues 153 to 184 (SCDYRFHAIAKHKRNITEMFHVSKXPYFEPLT) are Extracellular-facing. Residue N167 is glycosylated (N-linked (GlcNAc...) asparagine). The chain crosses the membrane as a helical span at residues 185 to 205 (LFNLFAIVPFIVSLISFFLLV). At 206–239 (RSLWRHTKQIKLYATGSRDPSTEVHVRAIKTMTS) the chain is on the cytoplasmic side. A helical membrane pass occupies residues 240 to 260 (FIFFFFLYFISSILMTFSYLM). At 261 to 266 (TKYKLA) the chain is on the extracellular side. Residues 267-287 (VEFGEIAAILYPLGHSLILIV) traverse the membrane as a helical segment. Over 288 to 309 (LNNKLRQIFVRMLTCRKIACVI) the chain is Cytoplasmic.

The protein belongs to the G-protein coupled receptor T2R family.

It is found in the membrane. Receptor that may play a role in the perception of bitterness and is gustducin-linked. May play a role in sensing the chemical composition of the gastrointestinal content. The activity of this receptor may stimulate alpha gustducin, mediate PLC-beta-2 activation and lead to the gating of TRPM5. This chain is Taste receptor type 2 member 8 (TAS2R8), found in Pan paniscus (Pygmy chimpanzee).